The chain runs to 268 residues: Phosphatidylglycerol--prolipoprotein diacylglyceryl transferase (268 aa).

4 helical membrane-spanning segments follow: residues Trp-23 to Ala-43, Phe-58 to Tyr-78, Gly-96 to Trp-116, and Gly-119 to Phe-139. Arg-141 is an a 1,2-diacyl-sn-glycero-3-phospho-(1'-sn-glycerol) binding site. 3 helical membrane passes run Ser-181–Val-201, Gly-206–Phe-226, and Ala-238–Val-258.

This sequence belongs to the Lgt family.

It localises to the cell inner membrane. The enzyme catalyses L-cysteinyl-[prolipoprotein] + a 1,2-diacyl-sn-glycero-3-phospho-(1'-sn-glycerol) = an S-1,2-diacyl-sn-glyceryl-L-cysteinyl-[prolipoprotein] + sn-glycerol 1-phosphate + H(+). It functions in the pathway protein modification; lipoprotein biosynthesis (diacylglyceryl transfer). Functionally, catalyzes the transfer of the diacylglyceryl group from phosphatidylglycerol to the sulfhydryl group of the N-terminal cysteine of a prolipoprotein, the first step in the formation of mature lipoproteins. The polypeptide is Phosphatidylglycerol--prolipoprotein diacylglyceryl transferase (Azospirillum brasilense).